Consider the following 109-residue polypeptide: Class I hydrophobin dewE (109 aa).

A signal peptide spans 1-20 (MKVATALSVLAVAGSALASA). Intrachain disulfides connect C34–C87, C40–C81, C41–C74, and C88–C102.

This sequence belongs to the fungal hydrophobin family. As to quaternary structure, self-assembles to form functional amyloid fibrils called rodlets. Self-assembly into fibrillar rodlets occurs spontaneously at hydrophobic:hydrophilic interfaces and the rodlets further associate laterally to form amphipathic monolayers.

It is found in the secreted. Its subcellular location is the spore wall. Its function is as follows. Aerial growth, conidiation, and dispersal of filamentous fungi in the environment rely upon a capability of their secreting small amphipathic proteins called hydrophobins (HPBs) with low sequence identity. Class I can self-assemble into an outermost layer of rodlet bundles on aerial cell surfaces, conferring cellular hydrophobicity that supports fungal growth, development and dispersal; whereas Class II form highly ordered films at water-air interfaces through intermolecular interactions but contribute nothing to the rodlet structure. DewE is a class I hydrophobin that contributes to the hydrophobicity of the spore surface. This chain is Class I hydrophobin dewE, found in Emericella nidulans (strain FGSC A4 / ATCC 38163 / CBS 112.46 / NRRL 194 / M139) (Aspergillus nidulans).